A 674-amino-acid chain; its full sequence is Sodium/myo-inositol cotransporter 2 (674 aa).

Topologically, residues 1–27 (MESSPSSPQPTQSDPLAVFPQRTLEPA) are extracellular. The chain crosses the membrane as a helical span at residues 28-48 (DIAVLVLYFLFVLAVGLWSTV). At 49 to 56 (KTRRDTVK) the chain is on the cytoplasmic side. Residues 57 to 77 (GYFLAGGDMVWWPVGASLFAS) traverse the membrane as a helical segment. At 78-102 (NVGSGHFVGLAGSGAAAGLSVTAYE) the chain is on the extracellular side. The helical transmembrane segment at 103–123 (FNGIFSVLMLAWIFLPIYIAG) threads the bilayer. Over 124–140 (QVTTMPEYLRKRFGGSR) the chain is Cytoplasmic. Residues 141–161 (IPITLAVLYLFIYIFTKISVD) traverse the membrane as a helical segment. Residues 162–180 (MYAGAIFIQQSLHLNLYLA) are Extracellular-facing. The chain crosses the membrane as a helical span at residues 181 to 201 (IVGLLAITALYTIAGGLAAVI). Topologically, residues 202–208 (YTDALQT) are cytoplasmic. Residues 209–229 (LIMLIGALTLMGYSFAAVGGM) form a helical membrane-spanning segment. Residues 230–272 (EGLKEKYFLALASNRSGNSSCGLPREDAFHIFRDPLTSDLPWP) are Extracellular-facing. Residues 273–293 (GILFGMSIPSLWYWCTDQVIV) form a helical membrane-spanning segment. Residues 294–308 (QRTLAAKNLSHAKGG) are Cytoplasmic-facing. Residues 309–329 (SLMAAYLKVLPLFIMVFPGMV) traverse the membrane as a helical segment. Residues 330–374 (SRVLFPDQVACADPEICQKVCSNPAGCSDIAYPKLVLELLPMGLR) lie on the Extracellular side of the membrane. A helical membrane pass occupies residues 375 to 397 (GLMMAVMVAALMSSLTSIFNSAS). Over 398–418 (TIFTMDLWNHLRPRASERELM) the chain is Cytoplasmic. A helical transmembrane segment spans residues 419–439 (IVGRVFVLLLVLVSILWIPVV). The Extracellular portion of the chain corresponds to 440–446 (QASQGGQ). A helical transmembrane segment spans residues 447-467 (LFIYIQSISSYLQPPVAVVFI). Residues 468–479 (MGCFWKRTNEKG) lie on the Cytoplasmic side of the membrane. The helical transmembrane segment at 480–500 (AFSGLILGLLLGLVRLVLDFI) threads the bilayer. At 501 to 518 (YPQPRCDQPDERPAVVRD) the chain is on the extracellular side. Residues 519–539 (VHYLYFSMILSSVTLVTVSTV) traverse the membrane as a helical segment. Topologically, residues 540–653 (SWCTAPPTQE…SLEEIPLVKT (114 aa)) are cytoplasmic. A helical membrane pass occupies residues 654 to 674 (LLDINLIVCISCAIFLWGYFA).

Belongs to the sodium:solute symporter (SSF) (TC 2.A.21) family.

It is found in the membrane. Its subcellular location is the apical cell membrane. The enzyme catalyses myo-inositol(out) + 2 Na(+)(out) = myo-inositol(in) + 2 Na(+)(in). It carries out the reaction 1D-chiro-inositol(out) + 2 Na(+)(out) = 1D-chiro-inositol(in) + 2 Na(+)(in). It catalyses the reaction D-glucose(out) + 2 Na(+)(out) = D-glucose(in) + 2 Na(+)(in). The catalysed reaction is D-xylose(out) + 2 Na(+)(out) = D-xylose(in) + 2 Na(+)(in). Its activity is regulated as follows. MI transport activity inhibited by D-chiro-inositol (DCI), phlorizin (Pz) and sodium (Na(+)). Insulin increases D-chiro-inositol uptake. In terms of biological role, involved in the sodium-dependent cotransport of myo-inositol (MI) with a Na(+):MI stoichiometry of 2:1. Exclusively responsible for apical MI transport and absorption in intestine. Can also transport D-chiro-inositol (DCI) but not L-fucose. Exhibits stereospecific cotransport of both D-glucose and D-xylose. May induce apoptosis through the TNF-alpha, PDCD1 pathway. May play a role in the regulation of MI concentration in serum, involving reabsorption in at least the proximal tubule of the kidney. The sequence is that of Sodium/myo-inositol cotransporter 2 from Sus scrofa (Pig).